We begin with the raw amino-acid sequence, 210 residues long: Protein-L-isoaspartate O-methyltransferase (210 aa).

S52 is a catalytic residue.

This sequence belongs to the methyltransferase superfamily. L-isoaspartyl/D-aspartyl protein methyltransferase family.

Its subcellular location is the cytoplasm. The catalysed reaction is [protein]-L-isoaspartate + S-adenosyl-L-methionine = [protein]-L-isoaspartate alpha-methyl ester + S-adenosyl-L-homocysteine. Functionally, catalyzes the methyl esterification of L-isoaspartyl residues in peptides and proteins that result from spontaneous decomposition of normal L-aspartyl and L-asparaginyl residues. It plays a role in the repair and/or degradation of damaged proteins. This is Protein-L-isoaspartate O-methyltransferase from Protochlamydia amoebophila (strain UWE25).